A 400-amino-acid chain; its full sequence is S-adenosylmethionine synthase (400 aa).

136-141 (GQGSVD) serves as a coordination point for ATP.

The protein belongs to the AdoMet synthase 2 family. Requires Mg(2+) as cofactor.

The catalysed reaction is L-methionine + ATP + H2O = S-adenosyl-L-methionine + phosphate + diphosphate. It functions in the pathway amino-acid biosynthesis; S-adenosyl-L-methionine biosynthesis; S-adenosyl-L-methionine from L-methionine: step 1/1. Catalyzes the formation of S-adenosylmethionine from methionine and ATP. In Thermoplasma volcanium (strain ATCC 51530 / DSM 4299 / JCM 9571 / NBRC 15438 / GSS1), this protein is S-adenosylmethionine synthase.